We begin with the raw amino-acid sequence, 420 residues long: Adenylosuccinate synthetase (420 aa).

Residues 11-17 and 39-41 contribute to the GTP site; these read GDEGKGK and GHT. The active-site Proton acceptor is Asp-12. Asp-12 and Gly-39 together coordinate Mg(2+). Residues 12–15, 37–40, Thr-129, Arg-143, Asn-218, Thr-233, and Arg-297 contribute to the IMP site; these read DEGK and NAGH. The active-site Proton donor is the His-40. 293-299 contacts substrate; it reads VTTGRKR. GTP-binding positions include Arg-299, 325–327, and 407–409; these read KLD and GTG.

It belongs to the adenylosuccinate synthetase family. As to quaternary structure, homodimer. It depends on Mg(2+) as a cofactor.

The protein localises to the cytoplasm. It catalyses the reaction IMP + L-aspartate + GTP = N(6)-(1,2-dicarboxyethyl)-AMP + GDP + phosphate + 2 H(+). The protein operates within purine metabolism; AMP biosynthesis via de novo pathway; AMP from IMP: step 1/2. Functionally, plays an important role in the de novo pathway and in the salvage pathway of purine nucleotide biosynthesis. Catalyzes the first committed step in the biosynthesis of AMP from IMP. The protein is Adenylosuccinate synthetase of Uncinocarpus reesii (strain UAMH 1704).